We begin with the raw amino-acid sequence, 883 residues long: Protein argonaute 16 (883 aa).

In terms of domain architecture, PAZ spans 254-366; the sequence is PVFDFLLTNQ…VPIELCHMVS (113 aa). In terms of domain architecture, Piwi spans 535–844; sequence FLLCVLPERK…AAAQMGQFMK (310 aa).

This sequence belongs to the argonaute family. Ago subfamily.

In terms of biological role, probably involved in the RNA silencing pathway. May bind to short RNAs such as microRNAs (miRNAs) or short interfering RNAs (siRNAs), and represses the translation of mRNAs which are complementary to them. This is Protein argonaute 16 (AGO16) from Oryza sativa subsp. japonica (Rice).